The primary structure comprises 346 residues: MTDVEIKAENGSGDASLEPENLRKIFVGGLTSNTTDDLMREFYSQFGEITDIIVMRDPTTKRSRGFGFVTFSGKTEVDAAMKQRPHIIDGKTVDPKRAVPRDDKNRSESNVSTKRLYVSGVREDHTEDMLTEYFTKYGTVTKSEIILDKATQKPRGFGFVTFDDHDSVDQCVLQKSHMVNGHRCDVRKGLSKDEMSKAQMNRDRETRGGRSRDGQRGGYNGGGGGGGGWGGPAQRGGPGAYGGPGGGGQGGYGGDYGGGWGQQGGGGQGGWGGPQQQQGGGGWGQQGGGGQGGWGGPQQQQQGGWGGPQQGGGGGGWGGQGQQQGGWGGQSGAQQWAHAQGGNRNY.

2 consecutive RRM domains span residues 23–123 and 114–191; these read RKIF…GVRE and KRLY…KGLS. Basic and acidic residues-rich tracts occupy residues 92–107 and 189–215; these read TVDP…KNRS and GLSK…RDGQ. 2 disordered regions span residues 92-111 and 189-346; these read TVDP…ESNV and GLSK…NRNY. Gly residues-rich tracts occupy residues 216 to 296 and 303 to 331; these read RGGY…GWGG and GGWG…GGQS. Positions 332-346 are enriched in low complexity; that stretch reads GAQQWAHAQGGNRNY.

The protein localises to the nucleus. It is found in the chromosome. The protein resides in the telomere. In terms of biological role, this protein is a component of ribonucleosomes. Overexpression gradually increases telomere length, leading to increase lifespan. The polypeptide is Heterogeneous nuclear ribonucleoprotein A1 (Caenorhabditis elegans).